Reading from the N-terminus, the 166-residue chain is Lipoprotein signal peptidase (166 aa).

3 helical membrane passes run 12 to 32, 70 to 90, and 102 to 122; these read WLWL…LILQ, WFFA…MYRS, and ALII…GFVV. Catalysis depends on residues Asp123 and Asp141. A helical membrane pass occupies residues 137–157; sequence FNLADTAICIGAALIVLEGFL.

Belongs to the peptidase A8 family.

It is found in the cell inner membrane. It carries out the reaction Release of signal peptides from bacterial membrane prolipoproteins. Hydrolyzes -Xaa-Yaa-Zaa-|-(S,diacylglyceryl)Cys-, in which Xaa is hydrophobic (preferably Leu), and Yaa (Ala or Ser) and Zaa (Gly or Ala) have small, neutral side chains.. It participates in protein modification; lipoprotein biosynthesis (signal peptide cleavage). Its function is as follows. This protein specifically catalyzes the removal of signal peptides from prolipoproteins. The polypeptide is Lipoprotein signal peptidase (Salmonella paratyphi A (strain ATCC 9150 / SARB42)).